The primary structure comprises 607 residues: Zinc finger protein 750 (607 aa).

The segment at 25–51 (YQCFQCPFTCNIKSHLFNHMKYNLCKN) adopts a CCHC-type zinc-finger fold. The Zn(2+) site is built by Cys27, Cys30, His43, and Cys49. Polar residues predominate over residues 60 to 78 (MEQTGKASRASQHSPAFSH). Disordered regions lie at residues 60-133 (MEQT…DKSE), 318-467 (RAVQ…SSQE), 482-511 (QALPNTSETPEKETISNAEVSTTESPQDLE), and 575-607 (GQKRANNRPLRHTNKRAKVKEPSRPRRKRSQNC). Composition is skewed to basic and acidic residues over residues 79-133 (NSKE…DKSE) and 318-334 (RAVQEHNTGDKGIRESP). The segment covering 369-380 (HSGSQSHIISGS) has biased composition (low complexity). Positions 421–432 (DKEEDEETEEEI) are enriched in acidic residues. Residues 452–462 (HYPDRELHYDS) show a composition bias toward basic and acidic residues. A compositionally biased stretch (polar residues) spans 496–507 (ISNAEVSTTESP). Residues 579–592 (ANNRPLRHTNKRAK) show a composition bias toward basic residues.

It localises to the nucleus. In terms of biological role, transcription factor involved in epidermis differentiation. This is Zinc finger protein 750 (znf750) from Danio rerio (Zebrafish).